Here is a 196-residue protein sequence, read N- to C-terminus: Hypoxanthine/guanine phosphoribosyltransferase (196 aa).

Belongs to the purine/pyrimidine phosphoribosyltransferase family. Archaeal HPRT subfamily. In terms of assembly, homodimer.

It localises to the cytoplasm. It catalyses the reaction IMP + diphosphate = hypoxanthine + 5-phospho-alpha-D-ribose 1-diphosphate. It carries out the reaction GMP + diphosphate = guanine + 5-phospho-alpha-D-ribose 1-diphosphate. The protein operates within purine metabolism; IMP biosynthesis via salvage pathway; IMP from hypoxanthine: step 1/1. Catalyzes a salvage reaction resulting in the formation of IMP that is energically less costly than de novo synthesis. In Methanocaldococcus sp. (strain FS406-22), this protein is Hypoxanthine/guanine phosphoribosyltransferase.